A 262-amino-acid chain; its full sequence is Small ribosomal subunit protein eS4A (262 aa).

The S4 RNA-binding domain occupies 42-105 (LPLIVFLRNR…GEHFRLVYDI (64 aa)).

It belongs to the eukaryotic ribosomal protein eS4 family. In terms of assembly, component of the small ribosomal subunit (SSU). Mature yeast ribosomes consist of a small (40S) and a large (60S) subunit. The 40S small subunit contains 1 molecule of ribosomal RNA (18S rRNA) and at least 33 different proteins. The large 60S subunit contains 3 rRNA molecules (25S, 5.8S and 5S rRNA) and at least 46 different proteins.

Its subcellular location is the cytoplasm. Component of the ribosome, a large ribonucleoprotein complex responsible for the synthesis of proteins in the cell. The small ribosomal subunit (SSU) binds messenger RNAs (mRNAs) and translates the encoded message by selecting cognate aminoacyl-transfer RNA (tRNA) molecules. The large subunit (LSU) contains the ribosomal catalytic site termed the peptidyl transferase center (PTC), which catalyzes the formation of peptide bonds, thereby polymerizing the amino acids delivered by tRNAs into a polypeptide chain. The nascent polypeptides leave the ribosome through a tunnel in the LSU and interact with protein factors that function in enzymatic processing, targeting, and the membrane insertion of nascent chains at the exit of the ribosomal tunnel. The sequence is that of Small ribosomal subunit protein eS4A (rps401) from Schizosaccharomyces pombe (strain 972 / ATCC 24843) (Fission yeast).